A 332-amino-acid polypeptide reads, in one-letter code: Geranylgeranyl diphosphate synthase (332 aa).

Lysine 45, arginine 48, and histidine 77 together coordinate isopentenyl diphosphate. Residues aspartate 84 and aspartate 88 each coordinate Mg(2+). Residue arginine 93 participates in an all-trans-polyprenyl diphosphate binding. Arginine 94 contacts isopentenyl diphosphate. The an all-trans-polyprenyl diphosphate site is built by lysine 177, threonine 178, glutamine 215, lysine 232, and lysine 242.

Belongs to the FPP/GGPP synthase family. Mg(2+) serves as cofactor.

It carries out the reaction isopentenyl diphosphate + (2E,6E)-farnesyl diphosphate = (2E,6E,10E)-geranylgeranyl diphosphate + diphosphate. It functions in the pathway isoprenoid biosynthesis; geranylgeranyl diphosphate biosynthesis; geranylgeranyl diphosphate from farnesyl diphosphate and isopentenyl diphosphate: step 1/1. Functionally, catalyzes the condensation of isopentenyl pyrophosphate with the allylic pyrophosphates to yield geranylgeranyl diphosphate (GGPP) which is a precursor of the ether-linked lipids. The sequence is that of Geranylgeranyl diphosphate synthase (gds) from Saccharolobus solfataricus (strain ATCC 35092 / DSM 1617 / JCM 11322 / P2) (Sulfolobus solfataricus).